Consider the following 530-residue polypeptide: Neutral amino acid transporter A (530 aa).

Met-1 bears the N-acetylmethionine mark. The segment covering 1–10 (MEKSSETNGY) has biased composition (polar residues). The interval 1-28 (MEKSSETNGYLDSAQEGPAAGPGEPGTT) is disordered. Topologically, residues 1–41 (MEKSSETNGYLDSAQEGPAAGPGEPGTTARRAGRCAGFLRR) are cytoplasmic. Over residues 16–28 (EGPAAGPGEPGTT) the composition is skewed to low complexity. Transmembrane regions (helical) follow at residues 42–62 (HGLV…GAAL), 88–108 (MIIL…LDAS), and 119–139 (AYFG…AFII). Residues 140 to 216 (KPGSGSQTLQ…VTIEKIPIGT (77 aa)) are Extracellular-facing. The N-linked (GlcNAc...) asparagine glycan is linked to Asn-201. A run of 6 helical transmembrane segments spans residues 217-237 (EIEG…GVAL), 257-277 (ATMV…MFLV), 298-318 (IFTS…LIYF), 328-348 (FLLG…SSAT), 373-393 (IGAT…AVFI), and 418-438 (VGAA…LEAI). The tract at residues 488–530 (ELSEVKVEAIPNSKSEEETSPLVTHPNPTGPAASTPESKESVL) is disordered. A phosphoserine mark is found at Ser-507, Ser-525, and Ser-528.

It belongs to the dicarboxylate/amino acid:cation symporter (DAACS) (TC 2.A.23) family. SLC1A4 subfamily.

It localises to the membrane. Its subcellular location is the melanosome. The enzyme catalyses L-threonine(in) + Na(+)(in) = L-threonine(out) + Na(+)(out). It catalyses the reaction L-serine(in) + Na(+)(in) = L-serine(out) + Na(+)(out). It carries out the reaction L-cysteine(in) + Na(+)(in) = L-cysteine(out) + Na(+)(out). The catalysed reaction is L-alanine(in) + Na(+)(in) = L-alanine(out) + Na(+)(out). The enzyme catalyses L-proline(in) + Na(+)(in) = L-proline(out) + Na(+)(out). It catalyses the reaction 4-hydroxy-L-proline(in) + Na(+)(in) = 4-hydroxy-L-proline(out) + Na(+)(out). In terms of biological role, sodium-dependent neutral amino-acid transporter that mediates transport of alanine, serine, cysteine, proline, hydroxyproline and threonine. The polypeptide is Neutral amino acid transporter A (SLC1A4) (Bos taurus (Bovine)).